The chain runs to 413 residues: Azaphilone biosynthesis cluster protein M (413 aa).

Over residues 123 to 138 (STQPDQVQPNQPTPSF) the composition is skewed to polar residues. A disordered region spans residues 123 to 145 (STQPDQVQPNQPTPSFESAAGAS).

The protein operates within secondary metabolite biosynthesis. Part of the gene cluster that mediates the biosynthesis of azaterrilone A and other azaphilones, a class of fungal metabolites characterized by a highly oxygenated pyrano-quinone bicyclic core and exhibiting a broad range of bioactivities. The first step of the pathway begins with the non-reducing polyketide synthase tazA that assembles one acetyl-CoA starter unit, five malonyl-CoA units, and catalyzes a series of Claisen condensations, methylation, PT-mediated cyclization, and finally releases the first hexaketide precursor through the R-domain. The tazA product then undergoes reduction on its terminal ketone and the following pyran-ring formation by yet undetermined enzyme(s). Dehydration and enoyl reduction, possibly involving the trans-enoyl reductase tazE leads to the next intermediate. TazD is predicted as an acetyltransferase and might catalyze the acetylation steps leading to the synthesis of azaterrilone A. Azaterrilone A is not the final product of the taz pathway and both the highly reducing polyketide synthase tazB and the dual enzyme tazHJ catalyze late steps of the pathway, leading to the production of the 2 final stereoisomers that contain additional polyketide modification whose structures have still to be determined. In Aspergillus terreus (strain NIH 2624 / FGSC A1156), this protein is Azaphilone biosynthesis cluster protein M.